Here is a 103-residue protein sequence, read N- to C-terminus: Small ribosomal subunit protein uS10 (103 aa).

It belongs to the universal ribosomal protein uS10 family. As to quaternary structure, part of the 30S ribosomal subunit.

In terms of biological role, involved in the binding of tRNA to the ribosomes. The chain is Small ribosomal subunit protein uS10 from Polynucleobacter asymbioticus (strain DSM 18221 / CIP 109841 / QLW-P1DMWA-1) (Polynucleobacter necessarius subsp. asymbioticus).